A 294-amino-acid chain; its full sequence is 4-hydroxy-tetrahydrodipicolinate synthase (294 aa).

A pyruvate-binding site is contributed by Thr-47. Tyr-136 serves as the catalytic Proton donor/acceptor. Lys-164 (schiff-base intermediate with substrate) is an active-site residue. A pyruvate-binding site is contributed by Val-206.

It belongs to the DapA family. In terms of assembly, homotetramer; dimer of dimers.

Its subcellular location is the cytoplasm. It catalyses the reaction L-aspartate 4-semialdehyde + pyruvate = (2S,4S)-4-hydroxy-2,3,4,5-tetrahydrodipicolinate + H2O + H(+). Its pathway is amino-acid biosynthesis; L-lysine biosynthesis via DAP pathway; (S)-tetrahydrodipicolinate from L-aspartate: step 3/4. In terms of biological role, catalyzes the condensation of (S)-aspartate-beta-semialdehyde [(S)-ASA] and pyruvate to 4-hydroxy-tetrahydrodipicolinate (HTPA). The polypeptide is 4-hydroxy-tetrahydrodipicolinate synthase (Acaryochloris marina (strain MBIC 11017)).